Here is a 367-residue protein sequence, read N- to C-terminus: Peptide chain release factor 1 (367 aa).

An N5-methylglutamine modification is found at Gln-243.

It belongs to the prokaryotic/mitochondrial release factor family. In terms of processing, methylated by PrmC. Methylation increases the termination efficiency of RF1.

It localises to the cytoplasm. Functionally, peptide chain release factor 1 directs the termination of translation in response to the peptide chain termination codons UAG and UAA. The chain is Peptide chain release factor 1 from Acidovorax ebreus (strain TPSY) (Diaphorobacter sp. (strain TPSY)).